The chain runs to 556 residues: 2-succinyl-5-enolpyruvyl-6-hydroxy-3-cyclohexene-1-carboxylate synthase (556 aa).

This sequence belongs to the TPP enzyme family. MenD subfamily. As to quaternary structure, homodimer. It depends on Mg(2+) as a cofactor. Requires Mn(2+) as cofactor. The cofactor is thiamine diphosphate.

The enzyme catalyses isochorismate + 2-oxoglutarate + H(+) = 5-enolpyruvoyl-6-hydroxy-2-succinyl-cyclohex-3-ene-1-carboxylate + CO2. Its pathway is quinol/quinone metabolism; 1,4-dihydroxy-2-naphthoate biosynthesis; 1,4-dihydroxy-2-naphthoate from chorismate: step 2/7. It participates in quinol/quinone metabolism; menaquinone biosynthesis. Its function is as follows. Catalyzes the thiamine diphosphate-dependent decarboxylation of 2-oxoglutarate and the subsequent addition of the resulting succinic semialdehyde-thiamine pyrophosphate anion to isochorismate to yield 2-succinyl-5-enolpyruvyl-6-hydroxy-3-cyclohexene-1-carboxylate (SEPHCHC). The sequence is that of 2-succinyl-5-enolpyruvyl-6-hydroxy-3-cyclohexene-1-carboxylate synthase from Saccharopolyspora erythraea (strain ATCC 11635 / DSM 40517 / JCM 4748 / NBRC 13426 / NCIMB 8594 / NRRL 2338).